The chain runs to 197 residues: UPF0319 protein VP0761 (197 aa).

The N-terminal stretch at 1-20 (MKKTTTLLGICAILSAPAFA) is a signal peptide.

It belongs to the UPF0319 family.

The sequence is that of UPF0319 protein VP0761 from Vibrio parahaemolyticus serotype O3:K6 (strain RIMD 2210633).